Here is a 220-residue protein sequence, read N- to C-terminus: Fructose-6-phosphate aldolase (220 aa).

The active-site Schiff-base intermediate with substrate is the K85.

Belongs to the transaldolase family. Type 3A subfamily. As to quaternary structure, homodecamer.

The protein resides in the cytoplasm. It catalyses the reaction beta-D-fructose 6-phosphate = dihydroxyacetone + D-glyceraldehyde 3-phosphate. Functionally, catalyzes the reversible formation of fructose 6-phosphate from dihydroxyacetone and D-glyceraldehyde 3-phosphate via an aldolization reaction. The polypeptide is Fructose-6-phosphate aldolase (Salmonella agona (strain SL483)).